Consider the following 180-residue polypeptide: UPF0227 protein YE1706 (180 aa).

It belongs to the UPF0227 family.

The sequence is that of UPF0227 protein YE1706 from Yersinia enterocolitica serotype O:8 / biotype 1B (strain NCTC 13174 / 8081).